Here is a 210-residue protein sequence, read N- to C-terminus: Large ribosomal subunit protein uL3 (210 aa).

This sequence belongs to the universal ribosomal protein uL3 family. As to quaternary structure, part of the 50S ribosomal subunit. Forms a cluster with proteins L14 and L19.

Functionally, one of the primary rRNA binding proteins, it binds directly near the 3'-end of the 23S rRNA, where it nucleates assembly of the 50S subunit. The sequence is that of Large ribosomal subunit protein uL3 from Geobacter sulfurreducens (strain ATCC 51573 / DSM 12127 / PCA).